A 51-amino-acid chain; its full sequence is Ribosome biogenesis protein Nop10 (51 aa).

This sequence belongs to the NOP10 family.

Its function is as follows. Involved in ribosome biogenesis; more specifically in 18S rRNA pseudouridylation and in cleavage of pre-rRNA. In Methanococcus maripaludis (strain C6 / ATCC BAA-1332), this protein is Ribosome biogenesis protein Nop10.